Consider the following 861-residue polypeptide: DNA mismatch repair protein MutS (861 aa).

618 to 625 is a binding site for ATP; it reads GPNMGGKS.

This sequence belongs to the DNA mismatch repair MutS family.

Its function is as follows. This protein is involved in the repair of mismatches in DNA. It is possible that it carries out the mismatch recognition step. This protein has a weak ATPase activity. This Shewanella sp. (strain MR-7) protein is DNA mismatch repair protein MutS.